The sequence spans 60 residues: Metallothionein (60 aa).

Residue M1 is modified to N-acetylmethionine. Residues 1 to 28 form a beta region; it reads MDPCECSKTGTCNCGGSCTCKNCSCTTC. A divalent metal cation contacts are provided by C4, C6, C12, C14, C18, C20, C23, C25, C28, C32, C33, C35, C36, C40, C43, C47, C49, C54, C58, and C59. Residues 29–60 form an alpha region; the sequence is TKSCCPCCPSGCPKCASGCVCKGKTCDTTCCQ.

Belongs to the metallothionein superfamily. Type 1 family.

Functionally, metallothioneins have a high content of cysteine residues that bind various heavy metals. In Pseudopleuronectes americanus (Winter flounder), this protein is Metallothionein (mt).